The sequence spans 71 residues: uncharacterized protein (71 aa).

The HTH cro/C1-type domain maps to 5-59 (IKEFRAKFNMTQEELAKRVGVRRETIVFLEKGKYNPSLKLAYKIARVFNAKIEDI). Positions 16 to 35 (QEELAKRVGVRRETIVFLEK) form a DNA-binding region, H-T-H motif.

This is an uncharacterized protein from Archaeoglobus fulgidus (strain ATCC 49558 / DSM 4304 / JCM 9628 / NBRC 100126 / VC-16).